Here is a 331-residue protein sequence, read N- to C-terminus: Putative lipoprotein YerB (331 aa).

The N-terminal stretch at 1–19 is a signal peptide; that stretch reads MKKWMTVCALCFVFFLLVS. C20 carries the N-palmitoyl cysteine lipid modification. C20 is lipidated: S-diacylglycerol cysteine. The residue at position 97 (T97) is a Phosphothreonine. A Phosphoserine modification is found at S103.

Interacts with PcrA. The interaction is not essential for cell viability or repair of UV-induced lesions.

It localises to the cell membrane. This is Putative lipoprotein YerB (yerB) from Bacillus subtilis (strain 168).